Consider the following 194-residue polypeptide: Lymphocyte antigen 6 complex locus protein G5b (194 aa).

The signal sequence occupies residues 1-18 (MRACVLVHVLTMVGFALG). In terms of domain architecture, UPAR/Ly6 spans 26 to 118 (RTCHLCFLED…SAQHQSTLPG (93 aa)). 5 cysteine pairs are disulfide-bonded: cysteine 28/cysteine 55, cysteine 31/cysteine 40, cysteine 47/cysteine 73, cysteine 81/cysteine 98, and cysteine 99/cysteine 104. N-linked (GlcNAc...) asparagine glycosylation occurs at asparagine 182.

Post-translationally, N-glycosylated.

The protein localises to the secreted. This chain is Lymphocyte antigen 6 complex locus protein G5b (Ly6g5b), found in Rattus norvegicus (Rat).